A 743-amino-acid polypeptide reads, in one-letter code: Beta-galactosidase (743 aa).

Glu388 serves as the catalytic Proton donor. The active-site Nucleophile is the Glu453.

The protein belongs to the glycosyl hydrolase 2 family. In terms of assembly, homodimer.

It carries out the reaction Hydrolysis of terminal non-reducing beta-D-galactose residues in beta-D-galactosides.. Functionally, beta-galactosidase. The polypeptide is Beta-galactosidase (lacZ) (Thermoanaerobacter pseudethanolicus (strain ATCC 33223 / 39E) (Clostridium thermohydrosulfuricum)).